Consider the following 83-residue polypeptide: Protein CASPARIAN STRIP INTEGRITY FACTOR 1 (83 aa).

An N-terminal signal peptide occupies residues Met1–Ala22. Residues Met59 to Asn83 are disordered. Tyr64 bears the Sulfotyrosine mark. A hydroxyproline mark is found at Pro69 and Pro71.

As to quaternary structure, interacts with the specific receptor kinases GSO1 and GSO2. As to expression, expressed exclusively in the root stele.

In terms of biological role, peptide hormone required for contiguous Casparian strip diffusion barrier formation in roots via the regulation of CASPs protein expression and distribution in a GSO1-GSO2 signaling pathway. The Casparian strip is required for ion homeostasis (e.g. iron and potassium ions). The polypeptide is Protein CASPARIAN STRIP INTEGRITY FACTOR 1 (Arabidopsis thaliana (Mouse-ear cress)).